A 449-amino-acid chain; its full sequence is Probable glycosyltransferase 5 (449 aa).

A compositionally biased stretch (basic and acidic residues) spans 1-14 (MMEKHGGKVTSDRR). Residues 1–24 (MMEKHGGKVTSDRRAGRRQHGQRC) form a disordered region. Topologically, residues 1–28 (MMEKHGGKVTSDRRAGRRQHGQRCSASD) are cytoplasmic. The helical; Signal-anchor for type II membrane protein transmembrane segment at 29–49 (AAPLVVVVILIVGALFLILGP) threads the bilayer. Residues 50–449 (TGSSSFTVPR…HPTFRAARPT (400 aa)) lie on the Lumenal side of the membrane. Positions 74–109 (APPPPPPPAQMQAGANASSEEDSGLPPPRQLTDPPY) are disordered. 3 N-linked (GlcNAc...) asparagine glycosylation sites follow: Asn-89, Asn-413, and Asn-422.

It belongs to the glycosyltransferase 34 family.

Its subcellular location is the golgi apparatus membrane. Probable glycosyltransferase that may be involved in the biosynthesis of xyloglucan. The protein is Probable glycosyltransferase 5 of Oryza sativa subsp. indica (Rice).